Consider the following 485-residue polypeptide: MDALKQLEVSPSILFVTLAVMAGIILFFRSKRHSSVKLPPGNLGFPLVGETLQFVRSLGSSTPQQFIEERMSKFGDVFKTSIIGHPTVVLCGPAGNRLVLSNENKLVQMSWPSSMMKLIGEDCLGGKTGEQHRIVRAALTRFLGPQALQNHFAKMSSGIQRHINEKWKGKDEATVLPLVKDLVFSVASRLFFGITEEHLQEQLHNLLEVILVGSFSVPLNIPGFSYHKAIQARATLADIMTHLIEKRRNELRAGTASENQDLLSVLLTFTDERGNSLADKEILDNFSMLLHGSYDSTNSPLTMLIKVLASHPESYEKVAQEQFGILSTKMEGEEIAWKDLKEMKYSWQVVQETLRMYPPIFGTFRKAITDIHYNGYTIPKGWKLLWTTYSTQTKEEYFKDADQFKPSRFEEEGKHVTPYTYLPFGGGMRVCPGWEFAKMETLLFLHHFVKAFSGLKAIDPNEKLSGKPLPPLPVNGLPIKLYSRS.

Residue Cys431 coordinates heme.

It belongs to the cytochrome P450 family. Heme serves as cofactor.

The enzyme catalyses taxa-4(20),11-dien-5alpha-ol + reduced [NADPH--hemoprotein reductase] + O2 = taxa-4(20),11-dien-5alpha,13alpha-diol + oxidized [NADPH--hemoprotein reductase] + H2O + H(+). The protein operates within alkaloid biosynthesis; taxol biosynthesis. In terms of biological role, involved in the transformation of a taxadienyl acetate by hydroxylation at C13 to yield taxadien-5-alpha-acetoxy-13-alpha-ol. The protein is Taxane 13-alpha-hydroxylase (CYP725A2) of Taxus cuspidata (Japanese yew).